We begin with the raw amino-acid sequence, 102 residues long: Monothiol glutaredoxin-S5 (102 aa).

Residues 1–101 form the Glutaredoxin domain; the sequence is MENLQKMISE…PMLKRAGALW (101 aa). Cysteine 21 lines the [2Fe-2S] cluster pocket. The Responsive for interaction with TGA factors motif lies at 99-102; it reads ALWL.

This sequence belongs to the glutaredoxin family. CC-type subfamily.

Its subcellular location is the cytoplasm. The protein resides in the nucleus. In terms of biological role, may only reduce GSH-thiol disulfides, but not protein disulfides. This Arabidopsis thaliana (Mouse-ear cress) protein is Monothiol glutaredoxin-S5 (GRXS5).